A 154-amino-acid polypeptide reads, in one-letter code: 3-hydroxyacyl-[acyl-carrier-protein] dehydratase FabZ (154 aa).

H57 is an active-site residue.

This sequence belongs to the thioester dehydratase family. FabZ subfamily.

Its subcellular location is the cytoplasm. It carries out the reaction a (3R)-hydroxyacyl-[ACP] = a (2E)-enoyl-[ACP] + H2O. Involved in unsaturated fatty acids biosynthesis. Catalyzes the dehydration of short chain beta-hydroxyacyl-ACPs and long chain saturated and unsaturated beta-hydroxyacyl-ACPs. The chain is 3-hydroxyacyl-[acyl-carrier-protein] dehydratase FabZ from Sinorhizobium fredii (strain NBRC 101917 / NGR234).